A 234-amino-acid polypeptide reads, in one-letter code: Probable RNA/DNA demethylase ALKBH6 (234 aa).

The 127-residue stretch at Thr96–Pro222 folds into the Fe2OG dioxygenase domain. 2 residues coordinate 2-oxoglutarate: Asn103 and Tyr105. Positions 114, 116, and 180 each coordinate Fe cation. 2-oxoglutarate is bound by residues Arg213 and Ser215.

This sequence belongs to the alkB family. Fe(2+) is required as a cofactor.

The protein localises to the cytoplasm. Its subcellular location is the nucleus. Probable Fe(2+)/2-oxoglutarate-dependent dioxygenase involved in oxidative demethylation of nucleic acids. Binds nucleic acids with a preference for ssDNA or ssRNA to other types of DNAs. May play a role in nucleic acid damage repair. This is Probable RNA/DNA demethylase ALKBH6 (alkbh6) from Danio rerio (Zebrafish).